The sequence spans 132 residues: T-cell receptor alpha chain V region 2B4 (132 aa).

Positions 1 to 20 (MKSLSVSLVVLWLLLNWVNS) are cleaved as a signal peptide. The v segment stretch occupies residues 21 to 113 (QQNVQQSPES…SALYLCAVTL (93 aa)). The N-linked (GlcNAc...) asparagine glycan is linked to Asn42. The tract at residues 114-117 (YGGS) is d segment. Residues 118 to 132 (GNKLIFGTGTLLSVK) are j segment.

The sequence is that of T-cell receptor alpha chain V region 2B4 from Mus musculus (Mouse).